The following is a 484-amino-acid chain: Probable efflux pump outer membrane protein TtgC (484 aa).

The N-terminal stretch at 1 to 17 (MTKSLLSLAVTAFILGG) is a signal peptide. The N-palmitoyl cysteine moiety is linked to residue cysteine 18. Residue cysteine 18 is the site of S-diacylglycerol cysteine attachment.

Belongs to the outer membrane factor (OMF) (TC 1.B.17) family.

The protein localises to the cell outer membrane. Functionally, probable outer membrane component of the TtgABC efflux pump with unknown specificity. This is Probable efflux pump outer membrane protein TtgC (ttgC) from Pseudomonas putida (strain ATCC 47054 / DSM 6125 / CFBP 8728 / NCIMB 11950 / KT2440).